The sequence spans 80 residues: Putative membrane protein insertion efficiency factor (80 aa).

The disordered stretch occupies residues 60–80 (SKTGKDPVPDRFSLKRNQEGE). Residues 62-80 (TGKDPVPDRFSLKRNQEGE) are compositionally biased toward basic and acidic residues.

The protein belongs to the UPF0161 family.

It is found in the cell membrane. Functionally, could be involved in insertion of integral membrane proteins into the membrane. This Streptococcus pneumoniae serotype 4 (strain ATCC BAA-334 / TIGR4) protein is Putative membrane protein insertion efficiency factor.